The sequence spans 130 residues: Small ribosomal subunit protein uS8 (130 aa).

It belongs to the universal ribosomal protein uS8 family. As to quaternary structure, part of the 30S ribosomal subunit. Contacts proteins S5 and S12.

Functionally, one of the primary rRNA binding proteins, it binds directly to 16S rRNA central domain where it helps coordinate assembly of the platform of the 30S subunit. This is Small ribosomal subunit protein uS8 from Saccharophagus degradans (strain 2-40 / ATCC 43961 / DSM 17024).